The chain runs to 464 residues: ATP synthase subunit beta (464 aa).

153–160 (GGAGVGKT) is an ATP binding site.

The protein belongs to the ATPase alpha/beta chains family. In terms of assembly, F-type ATPases have 2 components, CF(1) - the catalytic core - and CF(0) - the membrane proton channel. CF(1) has five subunits: alpha(3), beta(3), gamma(1), delta(1), epsilon(1). CF(0) has three main subunits: a(1), b(2) and c(9-12). The alpha and beta chains form an alternating ring which encloses part of the gamma chain. CF(1) is attached to CF(0) by a central stalk formed by the gamma and epsilon chains, while a peripheral stalk is formed by the delta and b chains.

The protein resides in the cell inner membrane. The catalysed reaction is ATP + H2O + 4 H(+)(in) = ADP + phosphate + 5 H(+)(out). Its function is as follows. Produces ATP from ADP in the presence of a proton gradient across the membrane. The catalytic sites are hosted primarily by the beta subunits. The polypeptide is ATP synthase subunit beta (Burkholderia orbicola (strain MC0-3)).